A 383-amino-acid polypeptide reads, in one-letter code: 8-amino-7-oxononanoate synthase (383 aa).

Arg-21 is a binding site for substrate. A pyridoxal 5'-phosphate-binding site is contributed by 108–109 (GF). His-133 is a binding site for substrate. Residues Ser-179, His-207, and Thr-233 each coordinate pyridoxal 5'-phosphate. Lys-236 carries the post-translational modification N6-(pyridoxal phosphate)lysine. Residue Thr-350 participates in substrate binding.

Belongs to the class-II pyridoxal-phosphate-dependent aminotransferase family. BioF subfamily. Homodimer. Pyridoxal 5'-phosphate serves as cofactor.

It catalyses the reaction 6-carboxyhexanoyl-[ACP] + L-alanine + H(+) = (8S)-8-amino-7-oxononanoate + holo-[ACP] + CO2. It participates in cofactor biosynthesis; biotin biosynthesis. Functionally, catalyzes the decarboxylative condensation of pimeloyl-[acyl-carrier protein] and L-alanine to produce 8-amino-7-oxononanoate (AON), [acyl-carrier protein], and carbon dioxide. The polypeptide is 8-amino-7-oxononanoate synthase (Cronobacter sakazakii (strain ATCC BAA-894) (Enterobacter sakazakii)).